We begin with the raw amino-acid sequence, 664 residues long: Translation factor guf1, mitochondrial (664 aa).

The N-terminal 43 residues, 1–43 (MRGCLQLARWLSAAPKGTAASLTRAPFGLANATRFFTNSAARA), are a transit peptide targeting the mitochondrion. One can recognise a tr-type G domain in the interval 66–246 (ERYRNFCIVA…TVVDKIPAPI (181 aa)). GTP is bound by residues 75-82 (AHVDHGKS), 139-143 (DTPGH), and 193-196 (NKVD).

Belongs to the TRAFAC class translation factor GTPase superfamily. Classic translation factor GTPase family. LepA subfamily.

Its subcellular location is the mitochondrion inner membrane. It carries out the reaction GTP + H2O = GDP + phosphate + H(+). Functionally, promotes mitochondrial protein synthesis. May act as a fidelity factor of the translation reaction, by catalyzing a one-codon backward translocation of tRNAs on improperly translocated ribosomes. Binds to mitochondrial ribosomes in a GTP-dependent manner. This Aspergillus clavatus (strain ATCC 1007 / CBS 513.65 / DSM 816 / NCTC 3887 / NRRL 1 / QM 1276 / 107) protein is Translation factor guf1, mitochondrial (guf1).